A 731-amino-acid polypeptide reads, in one-letter code: 1,4-alpha-glucan branching enzyme GlgB (731 aa).

The Nucleophile role is filled by aspartate 409. The active-site Proton donor is the glutamate 462.

This sequence belongs to the glycosyl hydrolase 13 family. GlgB subfamily. In terms of assembly, monomer.

It carries out the reaction Transfers a segment of a (1-&gt;4)-alpha-D-glucan chain to a primary hydroxy group in a similar glucan chain.. It functions in the pathway glycan biosynthesis; glycogen biosynthesis. Its function is as follows. Catalyzes the formation of the alpha-1,6-glucosidic linkages in glycogen by scission of a 1,4-alpha-linked oligosaccharide from growing alpha-1,4-glucan chains and the subsequent attachment of the oligosaccharide to the alpha-1,6 position. In Roseobacter denitrificans (strain ATCC 33942 / OCh 114) (Erythrobacter sp. (strain OCh 114)), this protein is 1,4-alpha-glucan branching enzyme GlgB.